We begin with the raw amino-acid sequence, 971 residues long: Sodium/calcium exchanger 1 (971 aa).

The N-terminal stretch at 1–32 (MLRLSLPPNVSMGFRLVTLVALLFTHVDHITA) is a signal peptide. Residues 33–71 (DTEAETGGNETTECTGSYYCKKGVILPIWEPQDPSFGDK) are Extracellular-facing. The N-linked (GlcNAc...) asparagine glycan is linked to Asn41. A helical transmembrane segment spans residues 72 to 92 (IARATVYFVAMVYMFLGVSII). The Cytoplasmic segment spans residues 93 to 133 (ADRFMSSIEVITSQEKEITIKKPNGETTKTTVRIWNETVSN). Residues 134–154 (LTLMALGSSAPEILLSVIEVC) form a helical membrane-spanning segment. The Alpha-1 repeat unit spans residues 138-178 (ALGSSAPEILLSVIEVCGHNFTAGDLGPSTIVGSAAFNMFI). Residues 155-167 (GHNFTAGDLGPST) lie on the Extracellular side of the membrane. N-linked (GlcNAc...) asparagine glycosylation occurs at Asn157. Residues 168–188 (IVGSAAFNMFIIIALCVYVVP) traverse the membrane as a helical segment. Residues 189 to 201 (DGETRKIKHLRVF) are Cytoplasmic-facing. A helical membrane pass occupies residues 202–222 (FVTAAWSIFAYTWLYIILSVS). Topologically, residues 223-228 (SPGVVE) are extracellular. A helical transmembrane segment spans residues 229–249 (VWEGLLTFFFFPICVVFAWVA). At 250-798 (DRRLLFYKYV…FVPPTEYWNG (549 aa)) the chain is on the cytoplasmic side. A putative calmodulin-binding region region spans residues 251-270 (RRLLFYKYVYKRYRAGKQRG). Phosphoserine occurs at positions 282 and 389. Calx-beta domains are found at residues 393-493 (VNMD…VHLS) and 524-624 (ATIT…IEIG). Ca(2+) contacts are provided by Glu417, Asp453, Asp478, Asp479, Ile481, Glu483, Glu486, Asp530, Asp531, Asp532, Glu548, Asp584, Asp610, Glu611, Glu612, and Glu716. The chain crosses the membrane as a helical span at residues 799–819 (WACFIVSILMIGLLTAFIGDL). Topologically, residues 820–822 (ASH) are extracellular. Residues 823–843 (FGCTIGLKDSVTAVVFVALGT) form a helical membrane-spanning segment. One copy of the Alpha-2 repeat lies at 840-876 (ALGTSVPDTFASKVAATQDQYADASIGNVTGSNAVNV). Topologically, residues 844–872 (SVPDTFASKVAATQDQYADASIGNVTGSN) are cytoplasmic. A helical transmembrane segment spans residues 873–893 (AVNVFLGIGVAWSIAAIYHAA). Topologically, residues 894–904 (NGEQFKVSPGT) are extracellular. A helical transmembrane segment spans residues 905–925 (LAFSVTLFTIFAFINVGVLLY). Over 926–942 (RRRPEIGGELGGPRTAK) the chain is Cytoplasmic. A helical transmembrane segment spans residues 943–963 (LLTSSLFVLLWLLYIFFSSLE). The Extracellular segment spans residues 964–971 (AYCHIKGF).

Belongs to the Ca(2+):cation antiporter (CaCA) (TC 2.A.19) family. SLC8 subfamily. In terms of tissue distribution, detected in heart, brain cortex and hippocampus (at protein level). Cardiac sarcolemma or brain, and spleen. Expressed in all regions of the kidney, highest levels of expression in the distal convoluted tubule. Expressed throughout the CNS, in decreasing order of abundance in hippocampus, cortex, cerebellum, hypothalamus, midbrain and striatum. Expressed in numerous regions of the brain including multiple cortical layers, hippocampus, septal nuclei, thalamic nuclei, cerebellum, hypothalamus, olfactory bulb and brainstem. Also expressed in various regions of the spinal cord, ventricles and atria of the heart, lung, adrenals and kidney. Isoform 4 seems to be a predominant isoform in aorta, stomach, liver, and kidney.

It localises to the cell membrane. Its subcellular location is the cell projection. The protein resides in the dendrite. The catalysed reaction is Ca(2+)(in) + 3 Na(+)(out) = Ca(2+)(out) + 3 Na(+)(in). With respect to regulation, activated by micromolar levels of Ca(2+). Only active at low calcium concentrations. Not activated by PKC. Its activity is regulated as follows. Active at all calcium levels tested. Activated by PKC. With respect to regulation, only active at low calcium concentrations. Activated by PKC. Mediates the exchange of one Ca(2+) ion against three to four Na(+) ions across the cell membrane, and thereby contributes to the regulation of cytoplasmic Ca(2+) levels and Ca(2+)-dependent cellular processes. Contributes to Ca(2+) transport during excitation-contraction coupling in muscle. In a first phase, voltage-gated channels mediate the rapid increase of cytoplasmic Ca(2+) levels due to release of Ca(2+) stores from the endoplasmic reticulum. SLC8A1 mediates the export of Ca(2+) from the cell during the next phase, so that cytoplasmic Ca(2+) levels rapidly return to baseline. Required for normal embryonic heart development and the onset of heart contractions. The polypeptide is Sodium/calcium exchanger 1 (Slc8a1) (Rattus norvegicus (Rat)).